The sequence spans 217 residues: Large ribosomal subunit protein uL4 (217 aa).

It belongs to the universal ribosomal protein uL4 family. Part of the 50S ribosomal subunit.

In terms of biological role, one of the primary rRNA binding proteins, this protein initially binds near the 5'-end of the 23S rRNA. It is important during the early stages of 50S assembly. It makes multiple contacts with different domains of the 23S rRNA in the assembled 50S subunit and ribosome. Its function is as follows. Forms part of the polypeptide exit tunnel. The chain is Large ribosomal subunit protein uL4 from Koribacter versatilis (strain Ellin345).